Consider the following 307-residue polypeptide: Small ribosomal subunit protein bS1 (307 aa).

3 S1 motif domains span residues 32 to 101, 119 to 183, and 197 to 265; these read GDTV…LSIR, DATV…LSHR, and GEVV…LSTK.

It belongs to the bacterial ribosomal protein bS1 family.

Functionally, binds mRNA. This chain is Small ribosomal subunit protein bS1 (rpsA), found in Synechococcus sp. (strain ATCC 27144 / PCC 6301 / SAUG 1402/1) (Anacystis nidulans).